The primary structure comprises 329 residues: Phosphate acyltransferase (329 aa).

This sequence belongs to the PlsX family. In terms of assembly, homodimer. Probably interacts with PlsY.

The protein resides in the cytoplasm. It catalyses the reaction a fatty acyl-[ACP] + phosphate = an acyl phosphate + holo-[ACP]. It participates in lipid metabolism; phospholipid metabolism. Catalyzes the reversible formation of acyl-phosphate (acyl-PO(4)) from acyl-[acyl-carrier-protein] (acyl-ACP). This enzyme utilizes acyl-ACP as fatty acyl donor, but not acyl-CoA. The chain is Phosphate acyltransferase from Geobacillus sp. (strain WCH70).